The chain runs to 384 residues: Spermidine/putrescine import ATP-binding protein PotA (384 aa).

An ABC transporter domain is found at 6–238 (ITFNNVSKTF…PINHFVANFI (233 aa)). 40-47 (GASGSGKS) is an ATP binding site.

It belongs to the ABC transporter superfamily. Spermidine/putrescine importer (TC 3.A.1.11.1) family. As to quaternary structure, the complex is composed of two ATP-binding proteins (PotA), two transmembrane proteins (PotB and PotC) and a solute-binding protein (PotD).

Its subcellular location is the cell membrane. The enzyme catalyses ATP + H2O + polyamine-[polyamine-binding protein]Side 1 = ADP + phosphate + polyamineSide 2 + [polyamine-binding protein]Side 1.. In terms of biological role, part of the ABC transporter complex PotABCD involved in spermidine/putrescine import. Responsible for energy coupling to the transport system. The chain is Spermidine/putrescine import ATP-binding protein PotA from Streptococcus pyogenes serotype M12 (strain MGAS2096).